We begin with the raw amino-acid sequence, 205 residues long: Large ribosomal subunit protein uL4 (205 aa).

The disordered stretch occupies residues 44-79; sequence RAGTKAQKTRREVSGGGAKPWRQKGTGRARAGSSRS.

This sequence belongs to the universal ribosomal protein uL4 family. In terms of assembly, part of the 50S ribosomal subunit.

Its function is as follows. One of the primary rRNA binding proteins, this protein initially binds near the 5'-end of the 23S rRNA. It is important during the early stages of 50S assembly. It makes multiple contacts with different domains of the 23S rRNA in the assembled 50S subunit and ribosome. Functionally, forms part of the polypeptide exit tunnel. This is Large ribosomal subunit protein uL4 from Coxiella burnetii (strain RSA 331 / Henzerling II).